Reading from the N-terminus, the 492-residue chain is Ketol-acid reductoisomerase (NADP(+)) (492 aa).

The KARI N-terminal Rossmann domain maps to 15–208 (AQLGKCRFMA…GGDRAGVLES (194 aa)). NADP(+)-binding positions include 45–48 (CGAQ), arginine 68, arginine 76, serine 78, and 108–110 (DKQ). Residue histidine 132 is part of the active site. Residue glycine 158 participates in NADP(+) binding. 2 KARI C-terminal knotted domains span residues 209–344 (SFVA…KAPP) and 345–485 (FEGK…MTDM). Residues aspartate 217, glutamate 221, glutamate 389, and glutamate 393 each contribute to the Mg(2+) site. Residue serine 414 coordinates substrate.

This sequence belongs to the ketol-acid reductoisomerase family. The cofactor is Mg(2+).

The catalysed reaction is (2R)-2,3-dihydroxy-3-methylbutanoate + NADP(+) = (2S)-2-acetolactate + NADPH + H(+). It catalyses the reaction (2R,3R)-2,3-dihydroxy-3-methylpentanoate + NADP(+) = (S)-2-ethyl-2-hydroxy-3-oxobutanoate + NADPH + H(+). The protein operates within amino-acid biosynthesis; L-isoleucine biosynthesis; L-isoleucine from 2-oxobutanoate: step 2/4. Its pathway is amino-acid biosynthesis; L-valine biosynthesis; L-valine from pyruvate: step 2/4. Its function is as follows. Involved in the biosynthesis of branched-chain amino acids (BCAA). Catalyzes an alkyl-migration followed by a ketol-acid reduction of (S)-2-acetolactate (S2AL) to yield (R)-2,3-dihydroxy-isovalerate. In the isomerase reaction, S2AL is rearranged via a Mg-dependent methyl migration to produce 3-hydroxy-3-methyl-2-ketobutyrate (HMKB). In the reductase reaction, this 2-ketoacid undergoes a metal-dependent reduction by NADPH to yield (R)-2,3-dihydroxy-isovalerate. This chain is Ketol-acid reductoisomerase (NADP(+)), found in Edwardsiella ictaluri (strain 93-146).